Reading from the N-terminus, the 358-residue chain is Na(+)/H(+) exchange regulatory cofactor NHE-RF1 (358 aa).

Serine 2 carries the post-translational modification N-acetylserine. A phosphoserine mark is found at serine 2 and serine 46. The region spanning 14–94 (LCCLEKGPNG…AVRLLVVDPD (81 aa)) is the PDZ 1 domain. Residues 114-134 (QAGPEQAGPPAAPGEQGPAGE) show a composition bias toward low complexity. A disordered region spans residues 114–151 (QAGPEQAGPPAAPGEQGPAGENEPREVEKSHPERRELR). A compositionally biased stretch (basic and acidic residues) spans 135–151 (NEPREVEKSHPERRELR). A PDZ 2 domain is found at 154–234 (LCAMKKGPNG…EAKLLVVDKE (81 aa)). Residues 247–358 (SSEHLNGPLP…SEKKELFSNL (112 aa)) form a disordered region. A compositionally biased stretch (low complexity) spans 272–290 (LAPAASESPRPALARSASS). 3 positions are modified to phosphoserine: serine 279, serine 289, and serine 290. Residue threonine 292 is modified to Phosphothreonine. Serine 293, serine 298, and serine 301 each carry phosphoserine. A compositionally biased stretch (low complexity) spans 308 to 327 (TAPSSTSSSSDPILDFSISL). Over residues 348 to 358 (WSEKKELFSNL) the composition is skewed to basic and acidic residues.

In terms of assembly, homodimer, and heterodimer with NHERF2. Binds the N-termini of EZR, RDX and MSN. Binds the C-termini of PDGFRA, PDGFRB, ADRB2, NOS2 and CFTR. Binds ARHGAP17, EPI64, RACK1, OPRK1, GNAQ, CTNNB1 and PLCB3. Binds PDZK1. Interacts with CLCN3. Binds the C-terminus of PAG1. In resting T-cells, part of a PAG1-NHERF1-MSN complex which is disrupted upon TCR activation. Forms a complex with CFTR and SLC4A7. Forms a complex with SLC4A7 and ATP6V1B1. Interacts with TRPC4 (via the PDZ-binding domain). Directly interacts with HTR4. Interacts (via the PDZ 1 domain) with PODXL (via the C-terminal PDZ-binding motif DTHL); interaction is not detected in glomerular epithelium cells. Interacts (via the PDZ 1 domain) with PODXL (via the C-terminal PDZ-binding motif DTHL); the interaction take place early in the secretory pathway and is necessary for its apical membrane sorting. Interacts with SLC26A3. Interacts with MCC. Interacts with SLC34A1. Interacts (via the PDZ domains) with SLC26A6 isoform 4 and isoform 5. Interacts (via PDZ domains) with ACE2 (via PDZ-binding motif); the interaction may enhance ACE2 membrane residence. In terms of processing, phosphorylated on serine residues. In terms of tissue distribution, detected in ileum, duodenum and in kidney, where it is found in the glomerulus, the proximal tubule, the thick ascending limb of Henle's loop and the cortical collecting duct.

It localises to the cytoplasm. Its subcellular location is the apical cell membrane. It is found in the cell projection. The protein localises to the filopodium. The protein resides in the ruffle. It localises to the microvillus. Its subcellular location is the endomembrane system. Functionally, scaffold protein that connects plasma membrane proteins with members of the ezrin/moesin/radixin family and thereby helps to link them to the actin cytoskeleton and to regulate their surface expression. Necessary for recycling of internalized ADRB2. Was first known to play a role in the regulation of the activity and subcellular location of SLC9A3. Necessary for cAMP-mediated phosphorylation and inhibition of SLC9A3. Involved in sperm capacitation. May participate in the regulation of the chloride and bicarbonate homeostasis in spermatozoa. May enhance Wnt signaling. May participate in HTR4 targeting to microvilli. Involved in the regulation of phosphate reabsorption in the renal proximal tubules. The sequence is that of Na(+)/H(+) exchange regulatory cofactor NHE-RF1 (NHERF1) from Oryctolagus cuniculus (Rabbit).